The primary structure comprises 534 residues: Light-independent protochlorophyllide reductase subunit B (534 aa).

Position 36 (aspartate 36) interacts with [4Fe-4S] cluster. Aspartate 274 (proton donor) is an active-site residue. 409–410 contributes to the substrate binding site; that stretch reads GL. The interval 426–446 is disordered; the sequence is DEAGPSHHGGKAVPASAPRAD.

The protein belongs to the ChlB/BchB/BchZ family. In terms of assembly, protochlorophyllide reductase is composed of three subunits; BchL, BchN and BchB. Forms a heterotetramer of two BchB and two BchN subunits. The cofactor is [4Fe-4S] cluster.

It catalyses the reaction chlorophyllide a + oxidized 2[4Fe-4S]-[ferredoxin] + 2 ADP + 2 phosphate = protochlorophyllide a + reduced 2[4Fe-4S]-[ferredoxin] + 2 ATP + 2 H2O. It participates in porphyrin-containing compound metabolism; bacteriochlorophyll biosynthesis (light-independent). Component of the dark-operative protochlorophyllide reductase (DPOR) that uses Mg-ATP and reduced ferredoxin to reduce ring D of protochlorophyllide (Pchlide) to form chlorophyllide a (Chlide). This reaction is light-independent. The NB-protein (BchN-BchB) is the catalytic component of the complex. The polypeptide is Light-independent protochlorophyllide reductase subunit B (Cereibacter sphaeroides (strain ATCC 17023 / DSM 158 / JCM 6121 / CCUG 31486 / LMG 2827 / NBRC 12203 / NCIMB 8253 / ATH 2.4.1.) (Rhodobacter sphaeroides)).